Reading from the N-terminus, the 437-residue chain is MRNTELIEWFRQSAPYVNMHRHKTFVIMLDGNAIAHPNFINITNDISLLHSLGIKLVIVFGARCQIENLLKQNNISSSYHHNIRVTDSNMLEIIKQAVGGLHYDIFSRLSLRLPHSPVLNVVSSNAILAQPLGVIDGVDYGLSGKIRRINIEAIQQQLAQNAIVVIGPIAPSVTGKMFNLAFEEIATQLAIKLKVDKLIAFCDRQGLLDEQGKVISDIHPREAKQHLKKFIQQGDYHHSAARFLQAAIDVCHAGIKRSHLISYQTDGSLLQELFSRDGVGTQLSEASSECIRLATSFDIAGLLNLIRPLEDQGLLVKRSREQLEMEISQYTIIERDGIVIACAALIHYPAEKMAEMACVAVHPDYRDSARGDILLEAIKRRAYKLNIEKLFVLTTQTIQWFQERGFVQIQPTDLPVEKQRHYNYQRMSKVLMLALDN.

Positions 289–437 (ECIRLATSFD…SKVLMLALDN (149 aa)) constitute an N-acetyltransferase domain.

This sequence belongs to the acetyltransferase family. ArgA subfamily.

The protein resides in the cytoplasm. It catalyses the reaction L-glutamate + acetyl-CoA = N-acetyl-L-glutamate + CoA + H(+). It participates in amino-acid biosynthesis; L-arginine biosynthesis; N(2)-acetyl-L-ornithine from L-glutamate: step 1/4. This Haemophilus ducreyi (strain 35000HP / ATCC 700724) protein is Amino-acid acetyltransferase.